Reading from the N-terminus, the 455-residue chain is Homeobox protein 14 (455 aa).

Composition is skewed to low complexity over residues Met-1–Ser-16, Ser-24–Gly-39, Thr-81–Asn-118, Glu-179–Phe-239, and Asn-263–Asn-294. Disordered regions lie at residues Met-1–Asn-53, Lys-67–Lys-121, Ser-178–Phe-239, and Thr-258–Asp-296. 2 consecutive DNA-binding regions (homeobox) follow at residues Lys-310–Gly-369 and Ser-372–Ser-431. The interval Ser-431–Gly-455 is disordered. Residues Asn-435–Glu-445 are compositionally biased toward low complexity. Acidic residues predominate over residues Asn-446–Gly-455.

It localises to the nucleus. Putative transcription factor. The polypeptide is Homeobox protein 14 (hbx14) (Dictyostelium discoideum (Social amoeba)).